A 146-amino-acid polypeptide reads, in one-letter code: D-aminoacyl-tRNA deacylase (146 aa).

The Gly-cisPro motif, important for rejection of L-amino acids signature appears at 137–138 (GP).

The protein belongs to the DTD family. As to quaternary structure, homodimer.

The protein localises to the cytoplasm. It catalyses the reaction glycyl-tRNA(Ala) + H2O = tRNA(Ala) + glycine + H(+). The enzyme catalyses a D-aminoacyl-tRNA + H2O = a tRNA + a D-alpha-amino acid + H(+). In terms of biological role, an aminoacyl-tRNA editing enzyme that deacylates mischarged D-aminoacyl-tRNAs. Also deacylates mischarged glycyl-tRNA(Ala), protecting cells against glycine mischarging by AlaRS. Acts via tRNA-based rather than protein-based catalysis; rejects L-amino acids rather than detecting D-amino acids in the active site. By recycling D-aminoacyl-tRNA to D-amino acids and free tRNA molecules, this enzyme counteracts the toxicity associated with the formation of D-aminoacyl-tRNA entities in vivo and helps enforce protein L-homochirality. This chain is D-aminoacyl-tRNA deacylase, found in Variovorax paradoxus (strain S110).